Here is a 432-residue protein sequence, read N- to C-terminus: Glutamate-1-semialdehyde 2,1-aminomutase (432 aa).

Lys266 bears the N6-(pyridoxal phosphate)lysine mark.

Belongs to the class-III pyridoxal-phosphate-dependent aminotransferase family. HemL subfamily. In terms of assembly, homodimer. The cofactor is pyridoxal 5'-phosphate.

It localises to the cytoplasm. It catalyses the reaction (S)-4-amino-5-oxopentanoate = 5-aminolevulinate. The protein operates within porphyrin-containing compound metabolism; protoporphyrin-IX biosynthesis; 5-aminolevulinate from L-glutamyl-tRNA(Glu): step 2/2. The sequence is that of Glutamate-1-semialdehyde 2,1-aminomutase from Janthinobacterium sp. (strain Marseille) (Minibacterium massiliensis).